A 129-amino-acid chain; its full sequence is M-zodatoxin-Lt8c (129 aa).

Positions 1 to 20 (MKYFVVALALVAAFACIAES) are cleaved as a signal peptide. Residues 21–60 (KPAESEHELAEVEEENELADLEDAVWLEHLADLSDLEEAR) constitute a propeptide that is removed on maturation. Positions 57-60 (EEAR) match the Processing quadruplet motif motif.

In terms of processing, cleavage of the propeptide depends on the processing quadruplet motif (XXXR, with at least one of X being E). In terms of tissue distribution, expressed by the venom gland.

It is found in the secreted. Functionally, insecticidal, cytolytic and antimicrobial peptide. Forms voltage-dependent, ion-permeable channels in membranes. At high concentration causes cell membrane lysis. This is M-zodatoxin-Lt8c (cit 1-3) from Lachesana tarabaevi (Spider).